The sequence spans 379 residues: tRNA(Met) cytidine acetate ligase (379 aa).

ATP-binding positions include 8–21 (IAEF…HEYL), G97, N153, and R176.

This sequence belongs to the TmcAL family.

It is found in the cytoplasm. The catalysed reaction is cytidine(34) in elongator tRNA(Met) + acetate + ATP = N(4)-acetylcytidine(34) in elongator tRNA(Met) + AMP + diphosphate. Its function is as follows. Catalyzes the formation of N(4)-acetylcytidine (ac(4)C) at the wobble position of elongator tRNA(Met), using acetate and ATP as substrates. First activates an acetate ion to form acetyladenylate (Ac-AMP) and then transfers the acetyl group to tRNA to form ac(4)C34. This is tRNA(Met) cytidine acetate ligase from Lactococcus lactis subsp. cremoris (strain MG1363).